Here is a 123-residue protein sequence, read N- to C-terminus: Small ribosomal subunit protein bS16 (123 aa).

Residues 87-123 (AKNNPIKAKPGKRAQERAAEKAQKAADAAAAAADAAE) are disordered. Residues 99–110 (RAQERAAEKAQK) are compositionally biased toward basic and acidic residues. A compositionally biased stretch (low complexity) spans 111–123 (AADAAAAAADAAE).

This sequence belongs to the bacterial ribosomal protein bS16 family.

The sequence is that of Small ribosomal subunit protein bS16 from Rhizobium etli (strain CIAT 652).